Consider the following 433-residue polypeptide: Serine--tRNA ligase (433 aa).

235–237 (TSE) serves as a coordination point for L-serine. 266–268 (RSE) serves as a coordination point for ATP. Residue glutamate 289 coordinates L-serine. 353-356 (EISS) provides a ligand contact to ATP. Serine 388 contributes to the L-serine binding site.

The protein belongs to the class-II aminoacyl-tRNA synthetase family. Type-1 seryl-tRNA synthetase subfamily. In terms of assembly, homodimer. The tRNA molecule binds across the dimer.

Its subcellular location is the cytoplasm. The catalysed reaction is tRNA(Ser) + L-serine + ATP = L-seryl-tRNA(Ser) + AMP + diphosphate + H(+). It carries out the reaction tRNA(Sec) + L-serine + ATP = L-seryl-tRNA(Sec) + AMP + diphosphate + H(+). It participates in aminoacyl-tRNA biosynthesis; selenocysteinyl-tRNA(Sec) biosynthesis; L-seryl-tRNA(Sec) from L-serine and tRNA(Sec): step 1/1. Its function is as follows. Catalyzes the attachment of serine to tRNA(Ser). Is also able to aminoacylate tRNA(Sec) with serine, to form the misacylated tRNA L-seryl-tRNA(Sec), which will be further converted into selenocysteinyl-tRNA(Sec). The chain is Serine--tRNA ligase from Burkholderia lata (strain ATCC 17760 / DSM 23089 / LMG 22485 / NCIMB 9086 / R18194 / 383).